Consider the following 399-residue polypeptide: Nuclear hormone receptor family member nhr-125 (399 aa).

Positions 10-80 form a DNA-binding region, nuclear receptor; sequence PFSCRICNQK…MGMDTTKFQY (71 aa). NR C4-type zinc fingers lie at residues 13-33 and 50-63; these read CRIC…CRAC and CQKG…CKRC. An NR LBD domain is found at 149-392; it reads QLENLTEGFK…EKLQKSQFSI (244 aa).

The protein belongs to the nuclear hormone receptor family.

It is found in the nucleus. In terms of biological role, orphan nuclear receptor. The polypeptide is Nuclear hormone receptor family member nhr-125 (nhr-125) (Caenorhabditis elegans).